A 1133-amino-acid chain; its full sequence is Lon protease homolog, mitochondrial (1133 aa).

The transit peptide at 1–37 directs the protein to the mitochondrion; it reads MLRTRTTKTLSTVARTTRAIQYYRSIAKTAAVSQRRF. The propeptide at 38 to 98 is removed in mature form; by autocatalysis; it reads ASTLTVRDVE…ATNSGKSILA (61 aa). Basic and acidic residues-rich tracts occupy residues 98–117 and 125–143; these read AKDD…VPDE and EPTR…EASK. Disordered regions lie at residues 98–176 and 282–358; these read AKDD…KDVP and ELFP…LDDI. Residues 145-166 are compositionally biased toward low complexity; that stretch reads SRSSASGGGQSSSSRSDSGDGS. Residues 182 to 480 enclose the Lon N-terminal domain; that stretch reads MLALPIARRP…KSLLVLKKEL (299 aa). 2 stretches are compositionally biased toward basic and acidic residues: residues 282–301 and 325–340; these read ELFP…KDTD and KLED…SELQ. A compositionally biased stretch (acidic residues) spans 348 to 358; that stretch reads TEEESEELDDI. ATP is bound at residue 632–639; the sequence is GPPGVGKT. A dispensable for catalytic activity region spans residues 839–892; that stretch reads KKLSIEDSPTSSADSKPKESVSSEEKAENNAKSSSEKTKDNNSEKTSDDIEALK. Positions 844–889 are disordered; the sequence is EDSPTSSADSKPKESVSSEEKAENNAKSSSEKTKDNNSEKTSDDIE. Positions 853–889 are enriched in basic and acidic residues; the sequence is SKPKESVSSEEKAENNAKSSSEKTKDNNSEKTSDDIE. The 187-residue stretch at 923–1109 folds into the Lon proteolytic domain; the sequence is TTPPGVVMGL…NDIFQKLFKD (187 aa). Catalysis depends on residues S1015 and K1058.

Belongs to the peptidase S16 family. As to quaternary structure, homohexamer. Organized in a ring with a central cavity. The ATP-binding and proteolytic domains (AP-domain) form a hexameric chamber. Oligomerization is independent of its proteolytic activity and the autocatalytic maturation of its subunits.

The protein localises to the mitochondrion matrix. It carries out the reaction Hydrolysis of proteins in presence of ATP.. Functionally, ATP-dependent serine protease that mediates the selective degradation of misfolded, unassembled or oxidatively damaged polypeptides as well as certain short-lived regulatory proteins in the mitochondrial matrix. May also have a chaperone function in the assembly of inner membrane protein complexes. Participates in the regulation of mitochondrial gene expression and in the maintenance of the integrity of the mitochondrial genome. Binds to mitochondrial DNA in a site-specific manner. Endogenous substrates include ABF2, ACO2, ILV1, ILV2, LSC1, LYS4, MGM101 and several oxidized proteins. The 2 nucleic acid-binding proteins ABF2 and MGM101 are protected from degradation by PIM1 when they are bound to DNA. In Saccharomyces cerevisiae (strain ATCC 204508 / S288c) (Baker's yeast), this protein is Lon protease homolog, mitochondrial.